Here is a 681-residue protein sequence, read N- to C-terminus: Spermatogenesis-associated protein 21 (681 aa).

Positions 1–14 (MENRNTHTHPESKA) are enriched in basic and acidic residues. Disordered regions lie at residues 1–284 (MENR…ANSR) and 298–336 (EEAT…VPTL). Composition is skewed to polar residues over residues 83-94 (QEPSARPRTTQD) and 159-173 (PSNS…NSPS). Positions 251-261 (PEERDTEKKEL) are enriched in basic and acidic residues. The segment covering 264-281 (GQKQRQQALSAAGTQGPA) has biased composition (polar residues). Residues 319 to 335 (TVTSVSTSGPISSSVPT) show a composition bias toward low complexity. One can recognise an EF-hand domain in the interval 464–499 (FTPAQVEEALMSADVNGDGHVDFKDFLAVMTDTKRF). Ca(2+) is bound by residues Asp477, Asn479, Asp481, His483, and Asp488. The interval 653–681 (LFFQPGQQGSREHSSDSRKWLSSMPARTH) is disordered. Positions 662 to 671 (SREHSSDSRK) are enriched in basic and acidic residues.

Functionally, involved in the differentiation of haploid spermatids. The polypeptide is Spermatogenesis-associated protein 21 (Spata21) (Mus musculus (Mouse)).